The sequence spans 127 residues: Small ribosomal subunit protein uS13 (127 aa).

The interval 92–127 is disordered; that stretch reads HRMGLPVRGQRTRTNARTRRGVRRTVAGKKKASAKK. The segment covering 101–127 has biased composition (basic residues); that stretch reads QRTRTNARTRRGVRRTVAGKKKASAKK.

Belongs to the universal ribosomal protein uS13 family. As to quaternary structure, part of the 30S ribosomal subunit. Forms a loose heterodimer with protein S19. Forms two bridges to the 50S subunit in the 70S ribosome.

Located at the top of the head of the 30S subunit, it contacts several helices of the 16S rRNA. In the 70S ribosome it contacts the 23S rRNA (bridge B1a) and protein L5 of the 50S subunit (bridge B1b), connecting the 2 subunits; these bridges are implicated in subunit movement. Contacts the tRNAs in the A and P-sites. This Trichodesmium erythraeum (strain IMS101) protein is Small ribosomal subunit protein uS13.